Reading from the N-terminus, the 554-residue chain is GPI transamidase component PIG-S homolog (554 aa).

At 1–73 the chain is on the cytoplasmic side; sequence MSPCKWLTMF…LNKPEKSLKR (73 aa). A helical transmembrane segment spans residues 74 to 94; it reads YALLSFYVIILLAIPVWWKTT. Residues 95 to 511 lie on the Lumenal side of the membrane; sequence HYERSSLPFE…VTTIYFPDES (417 aa). 2 N-linked (GlcNAc...) asparagine glycosylation sites follow: asparagine 132 and asparagine 375. The helical transmembrane segment at 512–532 threads the bilayer; the sequence is KYGIYAPLFAPILIPLLISFI. Residues 533–554 lie on the Cytoplasmic side of the membrane; that stretch reads KEVKDMLRERKLHRVANVPKPN.

The protein belongs to the PIGS family. In terms of assembly, forms a complex with PIG-T homolog, PIG-U homolog and GPI8.

The protein resides in the endoplasmic reticulum membrane. It participates in glycolipid biosynthesis; glycosylphosphatidylinositol-anchor biosynthesis. Functionally, component of the GPI transamidase complex. Involved in transfer of GPI to proteins. The sequence is that of GPI transamidase component PIG-S homolog (gpi17) from Schizosaccharomyces pombe (strain 972 / ATCC 24843) (Fission yeast).